Consider the following 407-residue polypeptide: Tryptophan 2,3-dioxygenase B (407 aa).

Substrate contacts are provided by residues 71–75 and Arg143; that span reads FIVTH. Position 327 (His327) interacts with heme. Residue Thr341 coordinates substrate.

Belongs to the tryptophan 2,3-dioxygenase family. As to quaternary structure, homotetramer. Dimer of dimers. The cofactor is heme.

It catalyses the reaction L-tryptophan + O2 = N-formyl-L-kynurenine. Its pathway is amino-acid degradation; L-tryptophan degradation via kynurenine pathway; L-kynurenine from L-tryptophan: step 1/2. Heme-dependent dioxygenase that catalyzes the oxidative cleavage of the L-tryptophan (L-Trp) pyrrole ring and converts L-tryptophan to N-formyl-L-kynurenine. Catalyzes the oxidative cleavage of the indole moiety. The protein is Tryptophan 2,3-dioxygenase B of Danio rerio (Zebrafish).